The primary structure comprises 55 residues: Histone H1 (55 aa).

Positions 1-15 (MAEVAPAPAAAAPAK) are enriched in low complexity. The tract at residues 1–28 (MAEVAPAPAAAAPAKAPKKKAAAKPKKA) is disordered. Alanine 2 carries the N-acetylalanine modification. A compositionally biased stretch (basic residues) spans 16–27 (APKKKAAAKPKK). An H15 domain is found at 28-55 (AGPSVGELIVKAVSASKERSGVSLAALK).

The protein belongs to the histone H1/H5 family.

The protein resides in the nucleus. It localises to the chromosome. Its subcellular location is the secreted. In terms of biological role, histones H1 are necessary for the condensation of nucleosome chains into higher-order structures. Functionally, SAMP H1 has antibacterial activity against Gram-negative bacteria E.coli, A.salmonicida subsp salmonicida, V.anguillarum and S.typhimurium and Gram-positive bacteria B.subtilis and L.ivanovii. The sequence is that of Histone H1 from Salmo salar (Atlantic salmon).